A 314-amino-acid chain; its full sequence is Olfactory receptor 5P72 (314 aa).

Residues 1 to 28 (MAFLEVGNHTAVTEFILLGLTDDPVLRV) are Extracellular-facing. Residue Asn-8 is glycosylated (N-linked (GlcNAc...) asparagine). The helical transmembrane segment at 29–49 (VLFTIILCIYLVTVMGNLSTI) threads the bilayer. Over 50–57 (LLIRVSSQ) the chain is Cytoplasmic. Residues 58–78 (LHHPMYFFLSHLASVDMGLSS) traverse the membrane as a helical segment. Residues 79–102 (SVTPNMLLNFLIERNTISYLGCGI) are Extracellular-facing. An intrachain disulfide couples Cys-100 to Cys-192. Residues 103-123 (QQSLADFFGSVECFLLAAMAY) form a helical membrane-spanning segment. Topologically, residues 124–136 (DRFMAICNPLLYS) are cytoplasmic. A helical membrane pass occupies residues 137–157 (TKMSTKVCVQLVVGSYIGGFL). The Extracellular portion of the chain corresponds to 158–199 (NASLIMFYFFSFLFCGPNRVDHFFCDFAPLVELSCSDVSVSV). A helical membrane pass occupies residues 200–220 (IVISFSAGSVTMITVFVIAVS). At 221 to 240 (YSYILITILKMHSIEGRHKA) the chain is on the cytoplasmic side. Residues 241–261 (FSTCTSHLTAVTLYYGTITFI) traverse the membrane as a helical segment. At 262–274 (YVMPKSSFSTDQN) the chain is on the extracellular side. A helical transmembrane segment spans residues 275–295 (KVVSVFYMVMIPMLNPLIYSL). Over 296–314 (RNNEIKGAIKRQLGKKMSC) the chain is Cytoplasmic.

It belongs to the G-protein coupled receptor 1 family.

It is found in the cell membrane. Potential odorant receptor. The polypeptide is Olfactory receptor 5P72 (Mus musculus (Mouse)).